Reading from the N-terminus, the 204-residue chain is uncharacterized protein (204 aa).

Residues 1-10 are compositionally biased toward polar residues; it reads MQQAITQQEK. Disordered regions lie at residues 1–20 and 70–99; these read MQQAITQQEKAQPKSVLPNR and DEARKLAEQQRIEDATRTQSKTTEDMKNTE. The 74-residue stretch at 131-204 folds into the SPOR domain; sequence VRDSKKFGLQ…TVTDCVVIGM (74 aa).

To E.coli FtsN repeat regions.

This is an uncharacterized protein from Haemophilus influenzae (strain ATCC 51907 / DSM 11121 / KW20 / Rd).